The chain runs to 687 residues: Protein SDA1 homolog (687 aa).

S232, S234, and S236 each carry phosphoserine. The stretch at K254–M315 forms a coiled coil. The interval L484–D509 is disordered. Residues T490–D509 are compositionally biased toward acidic residues. Phosphothreonine is present on T552. 3 positions are modified to phosphoserine: S585, S589, and S595. The tract at residues K604–F651 is disordered.

It belongs to the SDA1 family.

Its subcellular location is the nucleus. It is found in the nucleolus. In terms of biological role, required for 60S pre-ribosomal subunits export to the cytoplasm. The chain is Protein SDA1 homolog (Sdad1) from Mus musculus (Mouse).